Here is a 157-residue protein sequence, read N- to C-terminus: MRIGHGYDVHRFGEGDFITLGGVRIPHKHGLVAHSDGDVLLHALSDALLGAAALGDIGKHFPDTDPRFKGADSRALLRHVVAIVAEKGWKVGNVDATIVAQAPKMAPHIETMRGLIAEDLGVAVDQVNVKATTTERLGFTGREEGIAVHAVALLMAR.

A divalent metal cation-binding residues include Asp-8 and His-10. 4-CDP-2-C-methyl-D-erythritol 2-phosphate-binding positions include Asp-8–His-10 and His-34–Ser-35. His-42 is a binding site for a divalent metal cation. 4-CDP-2-C-methyl-D-erythritol 2-phosphate contacts are provided by residues Asp-56–Gly-58, Phe-61–Asp-65, Ala-100–Ala-106, Thr-132–Glu-135, Phe-139, and Arg-142.

This sequence belongs to the IspF family. Homotrimer. A divalent metal cation serves as cofactor.

It carries out the reaction 4-CDP-2-C-methyl-D-erythritol 2-phosphate = 2-C-methyl-D-erythritol 2,4-cyclic diphosphate + CMP. The protein operates within isoprenoid biosynthesis; isopentenyl diphosphate biosynthesis via DXP pathway; isopentenyl diphosphate from 1-deoxy-D-xylulose 5-phosphate: step 4/6. Its function is as follows. Involved in the biosynthesis of isopentenyl diphosphate (IPP) and dimethylallyl diphosphate (DMAPP), two major building blocks of isoprenoid compounds. Catalyzes the conversion of 4-diphosphocytidyl-2-C-methyl-D-erythritol 2-phosphate (CDP-ME2P) to 2-C-methyl-D-erythritol 2,4-cyclodiphosphate (ME-CPP) with a corresponding release of cytidine 5-monophosphate (CMP). The protein is 2-C-methyl-D-erythritol 2,4-cyclodiphosphate synthase of Pseudomonas aeruginosa (strain ATCC 15692 / DSM 22644 / CIP 104116 / JCM 14847 / LMG 12228 / 1C / PRS 101 / PAO1).